The sequence spans 68 residues: Small integral membrane protein 45 (68 aa).

The helical transmembrane segment at 7–27 threads the bilayer; that stretch reads WFVPVYLVISVLILVGFGACI.

As to expression, highly expressed in brain.

The protein localises to the nucleus. The protein resides in the cytoplasm. It localises to the membrane. In terms of biological role, plays a role in the regulation of neuron maturation. In Homo sapiens (Human), this protein is Small integral membrane protein 45.